The primary structure comprises 186 residues: Adenine phosphoribosyltransferase (186 aa).

The protein belongs to the purine/pyrimidine phosphoribosyltransferase family. In terms of assembly, homodimer.

The protein resides in the cytoplasm. It catalyses the reaction AMP + diphosphate = 5-phospho-alpha-D-ribose 1-diphosphate + adenine. It functions in the pathway purine metabolism; AMP biosynthesis via salvage pathway; AMP from adenine: step 1/1. In terms of biological role, catalyzes a salvage reaction resulting in the formation of AMP, that is energically less costly than de novo synthesis. This chain is Adenine phosphoribosyltransferase, found in Xanthomonas oryzae pv. oryzae (strain PXO99A).